Here is a 681-residue protein sequence, read N- to C-terminus: DNA ligase (681 aa).

Residues 44–48, 94–95, and E124 contribute to the NAD(+) site; these read DYIYD and SL. K126 functions as the N6-AMP-lysine intermediate in the catalytic mechanism. 4 residues coordinate NAD(+): R147, E181, K297, and K321. The Zn(2+) site is built by C415, C418, C433, and C438. One can recognise a BRCT domain in the interval 598–681; sequence DETSFFYGKK…EAQAKEGTDK (84 aa).

This sequence belongs to the NAD-dependent DNA ligase family. LigA subfamily. Mg(2+) serves as cofactor. The cofactor is Mn(2+).

The enzyme catalyses NAD(+) + (deoxyribonucleotide)n-3'-hydroxyl + 5'-phospho-(deoxyribonucleotide)m = (deoxyribonucleotide)n+m + AMP + beta-nicotinamide D-nucleotide.. Functionally, DNA ligase that catalyzes the formation of phosphodiester linkages between 5'-phosphoryl and 3'-hydroxyl groups in double-stranded DNA using NAD as a coenzyme and as the energy source for the reaction. It is essential for DNA replication and repair of damaged DNA. This Leuconostoc citreum (strain KM20) protein is DNA ligase.